Here is a 280-residue protein sequence, read N- to C-terminus: Type II restriction enzyme MboI (280 aa).

It belongs to the DpnII type II restriction endonuclease family.

The catalysed reaction is Endonucleolytic cleavage of DNA to give specific double-stranded fragments with terminal 5'-phosphates.. Its function is as follows. A P subtype restriction enzyme that recognizes the double-stranded unmethylated sequence 5'-GATC-3' and cleaves before G-1. The chain is Type II restriction enzyme MboI (mboIR) from Moraxella bovis.